Consider the following 249-residue polypeptide: Probable transcriptional regulatory protein Meso_3192 (249 aa).

It belongs to the TACO1 family.

It is found in the cytoplasm. The polypeptide is Probable transcriptional regulatory protein Meso_3192 (Chelativorans sp. (strain BNC1)).